We begin with the raw amino-acid sequence, 127 residues long: Large-conductance mechanosensitive channel (127 aa).

Transmembrane regions (helical) follow at residues 9–29 (EFAM…GVAF), 32–52 (IVTA…LGGV), and 75–95 (VIDF…INLL).

The protein belongs to the MscL family. Homopentamer.

It is found in the cell inner membrane. Functionally, channel that opens in response to stretch forces in the membrane lipid bilayer. May participate in the regulation of osmotic pressure changes within the cell. This Legionella pneumophila (strain Corby) protein is Large-conductance mechanosensitive channel.